Consider the following 660-residue polypeptide: Polyadenylate-binding protein 3 (660 aa).

RRM domains are found at residues 49 to 126 (SSLY…LSNR), 136 to 213 (GNIF…HFIR), 229 to 306 (TNVY…RAQK), and 332 to 409 (ANLY…LAQR). In terms of domain architecture, PABC spans 571–648 (PISKLTSSLA…ALDVLRLSVD (78 aa)).

It belongs to the polyadenylate-binding protein type-1 family. In terms of tissue distribution, expressed predominantly in immature flowers. Detected in tapetum and pollen. Strongly expressed in immatures siliques.

The protein localises to the cytoplasm. The protein resides in the nucleus. In terms of biological role, binds the poly(A) tail of mRNA. Appears to be an important mediator of the multiple roles of the poly(A) tail in mRNA biogenesis, stability and translation. In the cytoplasm, affects both translation and mRNA decay. Inhibits the polyadenylated RNA degradation by the Rrp41p 3'--&gt;5' exonuclease in vitro. Binds with the 5'UTRs of PAB2, PAB3 and with a lower affinity with the 5'UTR of PAB5. This chain is Polyadenylate-binding protein 3 (PAB3), found in Arabidopsis thaliana (Mouse-ear cress).